Consider the following 103-residue polypeptide: uncharacterized protein (103 aa).

It is found in the mitochondrion. This is an uncharacterized protein from Claviceps purpurea (Ergot fungus).